An 878-amino-acid polypeptide reads, in one-letter code: Alanine--tRNA ligase (878 aa).

The Zn(2+) site is built by histidine 558, histidine 562, cysteine 663, and histidine 667.

The protein belongs to the class-II aminoacyl-tRNA synthetase family. Zn(2+) is required as a cofactor.

The protein localises to the cytoplasm. It catalyses the reaction tRNA(Ala) + L-alanine + ATP = L-alanyl-tRNA(Ala) + AMP + diphosphate. Catalyzes the attachment of alanine to tRNA(Ala) in a two-step reaction: alanine is first activated by ATP to form Ala-AMP and then transferred to the acceptor end of tRNA(Ala). Also edits incorrectly charged Ser-tRNA(Ala) and Gly-tRNA(Ala) via its editing domain. This Mycoplasmopsis synoviae (strain 53) (Mycoplasma synoviae) protein is Alanine--tRNA ligase.